Here is a 347-residue protein sequence, read N- to C-terminus: Peptidoglycan recognition protein 3 (347 aa).

The first 26 residues, 1–26 (MLVSWDHPKMLPRLLGFLALSLLACG), serve as a signal peptide directing secretion. 2 N-acetylmuramoyl-L-alanine amidase domains span residues 77 to 185 (LQSQ…KACP) and 206 to 328 (PAKF…VSNI). An N-linked (GlcNAc...) asparagine glycan is attached at N120. Disulfide bonds link C184-C306, C200-C244, and C220-C226. Residues H237 and Y248 each coordinate peptidoglycan. Residues 270–275 (HTYGYN) are interaction with murein.

The protein belongs to the N-acetylmuramoyl-L-alanine amidase 2 family. Monomer. Homodimer; disulfide-linked. Heterodimer with PGLYRP4; disulfide-linked. Detected in lung, spleen and stomach, and at low levels in eye, heart, thymus and testis.

The protein localises to the secreted. Pattern receptor that binds to murein peptidoglycans (PGN) of Gram-positive bacteria. Has bactericidal activity towards Gram-positive bacteria. May kill Gram-positive bacteria by interfering with peptidoglycan biosynthesis. Also binds to Gram-negative bacteria, and has bacteriostatic activity towards Gram-negative bacteria. Plays a role in innate immunity. This Mus musculus (Mouse) protein is Peptidoglycan recognition protein 3 (Pglyrp3).